The following is a 116-amino-acid chain: Large ribosomal subunit protein bL20 (116 aa).

The protein belongs to the bacterial ribosomal protein bL20 family.

Functionally, binds directly to 23S ribosomal RNA and is necessary for the in vitro assembly process of the 50S ribosomal subunit. It is not involved in the protein synthesizing functions of that subunit. This Helicobacter pylori (strain HPAG1) protein is Large ribosomal subunit protein bL20.